The chain runs to 99 residues: Small ribosomal subunit protein uS14m (99 aa).

It belongs to the universal ribosomal protein uS14 family.

Its subcellular location is the mitochondrion. In Acanthamoeba castellanii (Amoeba), this protein is Small ribosomal subunit protein uS14m (RPS14).